A 160-amino-acid chain; its full sequence is MTPEEIARLPYRPCVGVMLMNGQGEVFVGQRRDNNVAAWQMPQGGVEKGEDPRAAALRELWEETGVNPELAEVVAETEDWLPYDLPYDLVPKLWKGRYRGQEQKWFLMRFHGADSDINIATEHPEFSQWRWLPAADLVENIVPFKRDVYVAVLDAFEAHL.

A Nudix hydrolase domain is found at 10–154 (PYRPCVGVML…KRDVYVAVLD (145 aa)). The Nudix box signature appears at 44–65 (GGVEKGEDPRAAALRELWEETG).

Belongs to the Nudix hydrolase family. RppH subfamily. A divalent metal cation serves as cofactor.

Accelerates the degradation of transcripts by removing pyrophosphate from the 5'-end of triphosphorylated RNA, leading to a more labile monophosphorylated state that can stimulate subsequent ribonuclease cleavage. The protein is RNA pyrophosphohydrolase of Roseobacter denitrificans (strain ATCC 33942 / OCh 114) (Erythrobacter sp. (strain OCh 114)).